We begin with the raw amino-acid sequence, 238 residues long: 2-C-methyl-D-erythritol 4-phosphate cytidylyltransferase (238 aa).

The protein belongs to the IspD/TarI cytidylyltransferase family. IspD subfamily.

The catalysed reaction is 2-C-methyl-D-erythritol 4-phosphate + CTP + H(+) = 4-CDP-2-C-methyl-D-erythritol + diphosphate. The protein operates within isoprenoid biosynthesis; isopentenyl diphosphate biosynthesis via DXP pathway; isopentenyl diphosphate from 1-deoxy-D-xylulose 5-phosphate: step 2/6. Functionally, catalyzes the formation of 4-diphosphocytidyl-2-C-methyl-D-erythritol from CTP and 2-C-methyl-D-erythritol 4-phosphate (MEP). In Acinetobacter baumannii (strain ATCC 17978 / DSM 105126 / CIP 53.77 / LMG 1025 / NCDC KC755 / 5377), this protein is 2-C-methyl-D-erythritol 4-phosphate cytidylyltransferase.